Here is a 296-residue protein sequence, read N- to C-terminus: ATP synthase gamma chain (296 aa).

The protein belongs to the ATPase gamma chain family. F-type ATPases have 2 components, CF(1) - the catalytic core - and CF(0) - the membrane proton channel. CF(1) has five subunits: alpha(3), beta(3), gamma(1), delta(1), epsilon(1). CF(0) has three main subunits: a, b and c.

Its subcellular location is the cell membrane. Its function is as follows. Produces ATP from ADP in the presence of a proton gradient across the membrane. The gamma chain is believed to be important in regulating ATPase activity and the flow of protons through the CF(0) complex. The chain is ATP synthase gamma chain from Pseudarthrobacter chlorophenolicus (strain ATCC 700700 / DSM 12829 / CIP 107037 / JCM 12360 / KCTC 9906 / NCIMB 13794 / A6) (Arthrobacter chlorophenolicus).